A 174-amino-acid polypeptide reads, in one-letter code: Large ribosomal subunit protein uL10 (174 aa).

The protein belongs to the universal ribosomal protein uL10 family. As to quaternary structure, part of the ribosomal stalk of the 50S ribosomal subunit. The N-terminus interacts with L11 and the large rRNA to form the base of the stalk. The C-terminus forms an elongated spine to which L12 dimers bind in a sequential fashion forming a multimeric L10(L12)X complex.

Forms part of the ribosomal stalk, playing a central role in the interaction of the ribosome with GTP-bound translation factors. The sequence is that of Large ribosomal subunit protein uL10 from Geobacter metallireducens (strain ATCC 53774 / DSM 7210 / GS-15).